The chain runs to 880 residues: Alanine--tRNA ligase (880 aa).

Residues histidine 566, histidine 570, cysteine 668, and histidine 672 each contribute to the Zn(2+) site.

The protein belongs to the class-II aminoacyl-tRNA synthetase family. The cofactor is Zn(2+).

It localises to the cytoplasm. It catalyses the reaction tRNA(Ala) + L-alanine + ATP = L-alanyl-tRNA(Ala) + AMP + diphosphate. In terms of biological role, catalyzes the attachment of alanine to tRNA(Ala) in a two-step reaction: alanine is first activated by ATP to form Ala-AMP and then transferred to the acceptor end of tRNA(Ala). Also edits incorrectly charged Ser-tRNA(Ala) and Gly-tRNA(Ala) via its editing domain. The sequence is that of Alanine--tRNA ligase from Nostoc punctiforme (strain ATCC 29133 / PCC 73102).